A 439-amino-acid chain; its full sequence is 3-phosphoshikimate 1-carboxyvinyltransferase (439 aa).

The 3-phosphoshikimate site is built by lysine 25, serine 26, and arginine 30. Phosphoenolpyruvate is bound at residue lysine 25. Residues glycine 96 and arginine 124 each contribute to the phosphoenolpyruvate site. 3-phosphoshikimate contacts are provided by serine 170, serine 171, glutamine 172, serine 202, aspartate 324, and lysine 351. Glutamine 172 is a phosphoenolpyruvate binding site. Residue aspartate 324 is the Proton acceptor of the active site. Residues arginine 355, arginine 399, and lysine 424 each contribute to the phosphoenolpyruvate site.

The protein belongs to the EPSP synthase family. Monomer.

It is found in the cytoplasm. It carries out the reaction 3-phosphoshikimate + phosphoenolpyruvate = 5-O-(1-carboxyvinyl)-3-phosphoshikimate + phosphate. It participates in metabolic intermediate biosynthesis; chorismate biosynthesis; chorismate from D-erythrose 4-phosphate and phosphoenolpyruvate: step 6/7. Its function is as follows. Catalyzes the transfer of the enolpyruvyl moiety of phosphoenolpyruvate (PEP) to the 5-hydroxyl of shikimate-3-phosphate (S3P) to produce enolpyruvyl shikimate-3-phosphate and inorganic phosphate. The protein is 3-phosphoshikimate 1-carboxyvinyltransferase of Bordetella avium (strain 197N).